The chain runs to 962 residues: Protein kinase ORF73 (962 aa).

2 disordered regions span residues 1 to 28 (MADRTPKRSADGLIHDAKPSKVTKNDRP) and 62 to 152 (STPA…RATT). Acidic residues predominate over residues 81–90 (DSDDDDEEDN). A compositionally biased stretch (polar residues) spans 143-152 (YDTTGRRATT). Positions 301–595 (LRAAPVLGKG…ASDLLKSPRY (295 aa)) constitute a Protein kinase domain. Residues 307-315 (LGKGYFGTV) and lysine 324 each bind ATP. The Proton acceptor role is filled by aspartate 434.

Belongs to the protein kinase superfamily. Ser/Thr protein kinase family.

The catalysed reaction is L-seryl-[protein] + ATP = O-phospho-L-seryl-[protein] + ADP + H(+). The enzyme catalyses L-threonyl-[protein] + ATP = O-phospho-L-threonyl-[protein] + ADP + H(+). This is Protein kinase ORF73 (ORF73) from Ictaluridae (bullhead catfishes).